The sequence spans 111 residues: Ribosome-binding factor A (111 aa).

It belongs to the RbfA family. In terms of assembly, monomer. Binds 30S ribosomal subunits, but not 50S ribosomal subunits or 70S ribosomes.

The protein localises to the cytoplasm. Functionally, one of several proteins that assist in the late maturation steps of the functional core of the 30S ribosomal subunit. Associates with free 30S ribosomal subunits (but not with 30S subunits that are part of 70S ribosomes or polysomes). Required for efficient processing of 16S rRNA. May interact with the 5'-terminal helix region of 16S rRNA. The chain is Ribosome-binding factor A from Helicobacter pylori (strain HPAG1).